Consider the following 227-residue polypeptide: Ribose-5-phosphate isomerase A (227 aa).

Substrate-binding positions include 26 to 29, 82 to 85, and 95 to 98; these read TGST, DGAD, and KGGG. E104 serves as the catalytic Proton acceptor. Residue K122 coordinates substrate.

Belongs to the ribose 5-phosphate isomerase family. Homodimer.

It carries out the reaction aldehydo-D-ribose 5-phosphate = D-ribulose 5-phosphate. The protein operates within carbohydrate degradation; pentose phosphate pathway; D-ribose 5-phosphate from D-ribulose 5-phosphate (non-oxidative stage): step 1/1. Catalyzes the reversible conversion of ribose-5-phosphate to ribulose 5-phosphate. The protein is Ribose-5-phosphate isomerase A of Streptococcus equi subsp. equi (strain 4047).